The chain runs to 189 residues: Small ribosomal subunit protein uS5 (189 aa).

Residues 20–83 (FMDRLVHINR…ESAKRSLIRV (64 aa)) form the S5 DRBM domain.

The protein belongs to the universal ribosomal protein uS5 family. Part of the 30S ribosomal subunit. Contacts proteins S4 and S8.

Its function is as follows. With S4 and S12 plays an important role in translational accuracy. Located at the back of the 30S subunit body where it stabilizes the conformation of the head with respect to the body. This is Small ribosomal subunit protein uS5 from Methylocella silvestris (strain DSM 15510 / CIP 108128 / LMG 27833 / NCIMB 13906 / BL2).